The sequence spans 332 residues: Tetraacyldisaccharide 4'-kinase (332 aa).

52–59 (TLGGAGKT) is a binding site for ATP.

It belongs to the LpxK family.

The enzyme catalyses a lipid A disaccharide + ATP = a lipid IVA + ADP + H(+). The protein operates within glycolipid biosynthesis; lipid IV(A) biosynthesis; lipid IV(A) from (3R)-3-hydroxytetradecanoyl-[acyl-carrier-protein] and UDP-N-acetyl-alpha-D-glucosamine: step 6/6. Functionally, transfers the gamma-phosphate of ATP to the 4'-position of a tetraacyldisaccharide 1-phosphate intermediate (termed DS-1-P) to form tetraacyldisaccharide 1,4'-bis-phosphate (lipid IVA). The polypeptide is Tetraacyldisaccharide 4'-kinase (Methylobacterium sp. (strain 4-46)).